We begin with the raw amino-acid sequence, 150 residues long: Mediator of RNA polymerase II transcription subunit 22a (150 aa).

Positions 99–127 form a coiled coil; that stretch reads SLNDHVEQRIAEFDQEAEKTNRLLARIAD.

The protein belongs to the Mediator complex subunit 22 family. In terms of assembly, component of the Mediator complex.

Its subcellular location is the nucleus. Component of the Mediator complex, a coactivator involved in the regulated transcription of nearly all RNA polymerase II-dependent genes. Mediator functions as a bridge to convey information from gene-specific regulatory proteins to the basal RNA polymerase II transcription machinery. The Mediator complex, having a compact conformation in its free form, is recruited to promoters by direct interactions with regulatory proteins and serves for the assembly of a functional preinitiation complex with RNA polymerase II and the general transcription factors. The sequence is that of Mediator of RNA polymerase II transcription subunit 22a (MED22A) from Arabidopsis thaliana (Mouse-ear cress).